Here is a 168-residue protein sequence, read N- to C-terminus: UPF0262 protein BRADO6636 (168 aa).

The protein belongs to the UPF0262 family.

The chain is UPF0262 protein BRADO6636 from Bradyrhizobium sp. (strain ORS 278).